Consider the following 124-residue polypeptide: Small ribosomal subunit protein uS13 (124 aa).

The disordered stretch occupies residues 95 to 124 (GLPVRGQRTKTNARTRKGPKRTIAGKKKAK).

The protein belongs to the universal ribosomal protein uS13 family. As to quaternary structure, part of the 30S ribosomal subunit. Forms a loose heterodimer with protein S19. Forms two bridges to the 50S subunit in the 70S ribosome.

Located at the top of the head of the 30S subunit, it contacts several helices of the 16S rRNA. In the 70S ribosome it contacts the 23S rRNA (bridge B1a) and protein L5 of the 50S subunit (bridge B1b), connecting the 2 subunits; these bridges are implicated in subunit movement. Contacts the tRNAs in the A and P-sites. This chain is Small ribosomal subunit protein uS13, found in Rhodococcus erythropolis (strain PR4 / NBRC 100887).